Consider the following 288-residue polypeptide: Acetyl-coenzyme A carboxylase carboxyl transferase subunit beta (288 aa).

In terms of domain architecture, CoA carboxyltransferase N-terminal spans 34–288; it reads LFAKCPACKH…HLVAFHGGGQ (255 aa). Zn(2+) is bound by residues Cys-38, Cys-41, Cys-56, and Cys-59. The C4-type zinc-finger motif lies at 38–59; the sequence is CPACKHMIYKKDLGLAKICPTC.

The protein belongs to the AccD/PCCB family. Acetyl-CoA carboxylase is a heterohexamer composed of biotin carboxyl carrier protein (AccB), biotin carboxylase (AccC) and two subunits each of ACCase subunit alpha (AccA) and ACCase subunit beta (AccD). The cofactor is Zn(2+).

Its subcellular location is the cytoplasm. The catalysed reaction is N(6)-carboxybiotinyl-L-lysyl-[protein] + acetyl-CoA = N(6)-biotinyl-L-lysyl-[protein] + malonyl-CoA. It functions in the pathway lipid metabolism; malonyl-CoA biosynthesis; malonyl-CoA from acetyl-CoA: step 1/1. Component of the acetyl coenzyme A carboxylase (ACC) complex. Biotin carboxylase (BC) catalyzes the carboxylation of biotin on its carrier protein (BCCP) and then the CO(2) group is transferred by the transcarboxylase to acetyl-CoA to form malonyl-CoA. This is Acetyl-coenzyme A carboxylase carboxyl transferase subunit beta from Streptococcus pyogenes serotype M1.